The sequence spans 378 residues: Ribosomal RNA large subunit methyltransferase G (378 aa).

This sequence belongs to the methyltransferase superfamily. RlmG family.

It is found in the cytoplasm. It catalyses the reaction guanosine(1835) in 23S rRNA + S-adenosyl-L-methionine = N(2)-methylguanosine(1835) in 23S rRNA + S-adenosyl-L-homocysteine + H(+). In terms of biological role, specifically methylates the guanine in position 1835 (m2G1835) of 23S rRNA. In Shewanella putrefaciens (strain CN-32 / ATCC BAA-453), this protein is Ribosomal RNA large subunit methyltransferase G.